The following is a 107-amino-acid chain: Replication initiation control protein YabA (107 aa).

Residues histidine 81, cysteine 83, cysteine 97, and cysteine 100 each coordinate Zn(2+).

The protein belongs to the YabA family. Homotetramer. Interacts with both DnaA and DnaN, acting as a bridge between these two proteins. It depends on Zn(2+) as a cofactor.

The protein resides in the cytoplasm. It is found in the nucleoid. In terms of biological role, involved in control of chromosome replication initiation. Inhibits the cooperative binding of DnaA to the oriC region, thus negatively regulating initiation of chromosome replication. Inhibits the ability of DnaA-ATP to form a helix on DNA; does not disassemble preformed DnaA-DNA helices. Decreases the residence time of DnaA on the chromosome at its binding sites (oriC, replication forks and promoter-binding sites). Tethers DnaA to the replication machinery via the DNA polymerase beta sliding clamp subunit (dnaN). Associates with oriC and other DnaA targets on the chromosome in a DnaA-dependent manner. This Streptococcus pyogenes serotype M1 protein is Replication initiation control protein YabA.